Consider the following 146-residue polypeptide: Ribonuclease P protein component (146 aa).

This sequence belongs to the RnpA family. Consists of a catalytic RNA component (M1 or rnpB) and a protein subunit.

The catalysed reaction is Endonucleolytic cleavage of RNA, removing 5'-extranucleotides from tRNA precursor.. Functionally, RNaseP catalyzes the removal of the 5'-leader sequence from pre-tRNA to produce the mature 5'-terminus. It can also cleave other RNA substrates such as 4.5S RNA. The protein component plays an auxiliary but essential role in vivo by binding to the 5'-leader sequence and broadening the substrate specificity of the ribozyme. This is Ribonuclease P protein component from Chlorobium phaeobacteroides (strain DSM 266 / SMG 266 / 2430).